We begin with the raw amino-acid sequence, 207 residues long: Calcipressin-like protein (207 aa).

The segment at 176–181 (PAIIVH) is required for tax-6 interaction.

Belongs to the RCAN family. Interacts with tax-6 (via catalytic domain); the interaction is calcium-dependent. In terms of tissue distribution, expressed in lateral hypodermal cells, marginal cells of the pharynx, vulva epithelial cells, ventral and dorsal nerve cords and commissures and various neurons in the anterior and posterior regions. Expressed in male tail structures including the diagonal muscles, sensory rays and spicules. Expressed in PHC neurons and most tail neurons and support cells of the phasmid neurons. Also expressed in pharyngeal muscle, head neurons, excretory canal cells and hypodermal seam cells.

Its function is as follows. Inhibits tax-6/calcineurin A phosphatase activity and thereby negatively regulates calcineurin-mediated functions. Plays a role in modulating temperature-dependent calcium responses in AFD neurons and in addition, also negatively regulates thermotaxis in a tax-6-dependent manner in AFD neurons. In response to changes in intracellular calcium levels may also regulate nuclear translocation of transcriptional regulators such as crtc-1. May play a role in regulating body size. Plays a role in male tail tip morphogenesis. This is Calcipressin-like protein from Caenorhabditis elegans.